The sequence spans 339 residues: MKFVDEAFVRVEAGNGGHGCLSFRREKFIPRGGPDGGDGGDGGSVYFVADKSVNTLVEFRYQRLLRAQNGQPGMGRLRSGKKGEDLIVPVPLGTTVYDKETSELIGDLIEAGDKLCVARGGRHGLGNTHFKSSTNRAPRRTTSGEEGEARELKLELKLLADVGLLGLPNAGKSTFIHAVSKATPKIADYPFTTLYPHLGVVRVEEYRSFVIADIPGLIEGASEGAGLGVQFLKHLERTQLLLHIVDIAPLDGSDPVQSIQAIISELEQFSQNLSQKPRWLVFNKIDLLPPDVAQARCQEIINRLNWKGPVYKISAIKRQGTELLCYDLMSFLETNQRSI.

The 159-residue stretch at 1–159 (MKFVDEAFVR…RELKLELKLL (159 aa)) folds into the Obg domain. The disordered stretch occupies residues 127 to 147 (NTHFKSSTNRAPRRTTSGEEG). Residues 160–333 (ADVGLLGLPN…LCYDLMSFLE (174 aa)) form the OBG-type G domain. Residues 166–173 (GLPNAGKS), 191–195 (FTTLY), 213–216 (DIPG), 283–286 (NKID), and 314–316 (SAI) contribute to the GTP site. 2 residues coordinate Mg(2+): Ser173 and Thr193.

This sequence belongs to the TRAFAC class OBG-HflX-like GTPase superfamily. OBG GTPase family. Monomer. Mg(2+) serves as cofactor.

Its subcellular location is the cytoplasm. An essential GTPase which binds GTP, GDP and possibly (p)ppGpp with moderate affinity, with high nucleotide exchange rates and a fairly low GTP hydrolysis rate. Plays a role in control of the cell cycle, stress response, ribosome biogenesis and in those bacteria that undergo differentiation, in morphogenesis control. This chain is GTPase Obg, found in Coxiella burnetii (strain CbuG_Q212) (Coxiella burnetii (strain Q212)).